The primary structure comprises 256 residues: Cytoplasmic envelopment protein 1 (256 aa).

The protein belongs to the herpesviridae cytoplasmic envelopment protein 1 family.

The protein localises to the virion. The protein resides in the virion tegument. It is found in the host cytoplasm. Its subcellular location is the host Golgi apparatus. In terms of biological role, plays a critical role in cytoplasmic virus egress. Participates in the final step of tegumentation and envelope acquisition within the host cytoplasm. This chain is Cytoplasmic envelopment protein 1 (U75), found in Homo sapiens (Human).